The following is a 509-amino-acid chain: Photosystem II CP47 reaction center protein (509 aa).

The next 6 membrane-spanning stretches (helical) occupy residues 21 to 36 (AVHLMHTALVAGWAGS), 101 to 115 (IVLSGMLFLAAIWHW), 140 to 156 (GIHLLLSSLLCFGFGAF), 203 to 218 (IAAGTVGILAGVFHLT), 237 to 252 (VLSSSISAVFFSAFVT), and 457 to 472 (NFALIFFFGHLWHGSR).

Belongs to the PsbB/PsbC family. PsbB subfamily. PSII is composed of 1 copy each of membrane proteins PsbA, PsbB, PsbC, PsbD, PsbE, PsbF, PsbH, PsbI, PsbJ, PsbK, PsbL, PsbM, PsbT, PsbX, PsbY, PsbZ, Psb30/Ycf12, at least 3 peripheral proteins of the oxygen-evolving complex and a large number of cofactors. It forms dimeric complexes. Binds multiple chlorophylls. PSII binds additional chlorophylls, carotenoids and specific lipids. is required as a cofactor.

It is found in the plastid. It localises to the chloroplast thylakoid membrane. Functionally, one of the components of the core complex of photosystem II (PSII). It binds chlorophyll and helps catalyze the primary light-induced photochemical processes of PSII. PSII is a light-driven water:plastoquinone oxidoreductase, using light energy to abstract electrons from H(2)O, generating O(2) and a proton gradient subsequently used for ATP formation. This is Photosystem II CP47 reaction center protein from Pyropia yezoensis (Susabi-nori).